Consider the following 64-residue polypeptide: Large ribosomal subunit protein uL30 (64 aa).

The protein belongs to the universal ribosomal protein uL30 family. Part of the 50S ribosomal subunit.

This is Large ribosomal subunit protein uL30 from Bradyrhizobium diazoefficiens (strain JCM 10833 / BCRC 13528 / IAM 13628 / NBRC 14792 / USDA 110).